The primary structure comprises 335 residues: Holliday junction branch migration complex subunit RuvB (335 aa).

The segment at 1 to 181 is large ATPase domain (RuvB-L); it reads MSERVISPEP…FGLLIRLNLY (181 aa). Residues L20, R21, G62, K65, T66, T67, 128–130, R171, Y181, and R218 contribute to the ATP site; that span reads EDF. T66 contacts Mg(2+). The interval 182-252 is small ATPAse domain (RuvB-S); that stretch reads SPEDLEKIVT…IAGAGLALLQ (71 aa). The interval 255–335 is head domain (RuvB-H); it reads ELGLDDIDRR…KLNHSQKTLF (81 aa). Positions 310 and 315 each coordinate DNA.

Belongs to the RuvB family. As to quaternary structure, homohexamer. Forms an RuvA(8)-RuvB(12)-Holliday junction (HJ) complex. HJ DNA is sandwiched between 2 RuvA tetramers; dsDNA enters through RuvA and exits via RuvB. An RuvB hexamer assembles on each DNA strand where it exits the tetramer. Each RuvB hexamer is contacted by two RuvA subunits (via domain III) on 2 adjacent RuvB subunits; this complex drives branch migration. In the full resolvosome a probable DNA-RuvA(4)-RuvB(12)-RuvC(2) complex forms which resolves the HJ.

It is found in the cytoplasm. The enzyme catalyses ATP + H2O = ADP + phosphate + H(+). The RuvA-RuvB-RuvC complex processes Holliday junction (HJ) DNA during genetic recombination and DNA repair, while the RuvA-RuvB complex plays an important role in the rescue of blocked DNA replication forks via replication fork reversal (RFR). RuvA specifically binds to HJ cruciform DNA, conferring on it an open structure. The RuvB hexamer acts as an ATP-dependent pump, pulling dsDNA into and through the RuvAB complex. RuvB forms 2 homohexamers on either side of HJ DNA bound by 1 or 2 RuvA tetramers; 4 subunits per hexamer contact DNA at a time. Coordinated motions by a converter formed by DNA-disengaged RuvB subunits stimulates ATP hydrolysis and nucleotide exchange. Immobilization of the converter enables RuvB to convert the ATP-contained energy into a lever motion, pulling 2 nucleotides of DNA out of the RuvA tetramer per ATP hydrolyzed, thus driving DNA branch migration. The RuvB motors rotate together with the DNA substrate, which together with the progressing nucleotide cycle form the mechanistic basis for DNA recombination by continuous HJ branch migration. Branch migration allows RuvC to scan DNA until it finds its consensus sequence, where it cleaves and resolves cruciform DNA. The polypeptide is Holliday junction branch migration complex subunit RuvB (Methanoregula boonei (strain DSM 21154 / JCM 14090 / 6A8)).